Reading from the N-terminus, the 198-residue chain is Guanylate kinase (198 aa).

N-acetylglycine is present on G2. The Guanylate kinase-like domain maps to 4 to 186 (PRPVVLSGPS…AYWALKEALS (183 aa)). 14–19 (GAGKST) contributes to the ATP binding site. 37–51 (SHTTRDPRPGEENGK) is a substrate binding site. Residues R44, R137, and R148 contribute to the active site. 171 to 172 (ND) contacts ATP.

This sequence belongs to the guanylate kinase family. Monomer. Interacts with RD3.

It localises to the photoreceptor inner segment. The protein resides in the cytoplasm. Its subcellular location is the cytosol. The catalysed reaction is GMP + ATP = GDP + ADP. Up-regulated by RD3. Catalyzes the phosphorylation of GMP to GDP. Essential enzyme for recycling GMP and indirectly, cyclic GMP (cGMP). Involved in the cGMP metabolism in photoreceptors. In Sus scrofa (Pig), this protein is Guanylate kinase (GUK1).